The sequence spans 302 residues: 4-hydroxy-tetrahydrodipicolinate synthase (302 aa).

Thr-55 provides a ligand contact to pyruvate. Residue Tyr-144 is the Proton donor/acceptor of the active site. Catalysis depends on Lys-172, which acts as the Schiff-base intermediate with substrate. A pyruvate-binding site is contributed by Val-214.

It belongs to the DapA family. As to quaternary structure, homotetramer; dimer of dimers.

Its subcellular location is the cytoplasm. The catalysed reaction is L-aspartate 4-semialdehyde + pyruvate = (2S,4S)-4-hydroxy-2,3,4,5-tetrahydrodipicolinate + H2O + H(+). It participates in amino-acid biosynthesis; L-lysine biosynthesis via DAP pathway; (S)-tetrahydrodipicolinate from L-aspartate: step 3/4. Functionally, catalyzes the condensation of (S)-aspartate-beta-semialdehyde [(S)-ASA] and pyruvate to 4-hydroxy-tetrahydrodipicolinate (HTPA). This chain is 4-hydroxy-tetrahydrodipicolinate synthase, found in Prochlorococcus marinus (strain MIT 9211).